A 356-amino-acid polypeptide reads, in one-letter code: 4-hydroxy-3-methylbut-2-en-1-yl diphosphate synthase (flavodoxin) (356 aa).

Cys264, Cys267, Cys299, and Glu306 together coordinate [4Fe-4S] cluster.

Belongs to the IspG family. [4Fe-4S] cluster serves as cofactor.

The enzyme catalyses (2E)-4-hydroxy-3-methylbut-2-enyl diphosphate + oxidized [flavodoxin] + H2O + 2 H(+) = 2-C-methyl-D-erythritol 2,4-cyclic diphosphate + reduced [flavodoxin]. It functions in the pathway isoprenoid biosynthesis; isopentenyl diphosphate biosynthesis via DXP pathway; isopentenyl diphosphate from 1-deoxy-D-xylulose 5-phosphate: step 5/6. Functionally, converts 2C-methyl-D-erythritol 2,4-cyclodiphosphate (ME-2,4cPP) into 1-hydroxy-2-methyl-2-(E)-butenyl 4-diphosphate. The sequence is that of 4-hydroxy-3-methylbut-2-en-1-yl diphosphate synthase (flavodoxin) from Natranaerobius thermophilus (strain ATCC BAA-1301 / DSM 18059 / JW/NM-WN-LF).